An 850-amino-acid chain; its full sequence is Trimethylguanosine synthase (850 aa).

Positions 54-85 (NNAGDRVTEEEEDDHSSGTTESHSADEGDLDP) are disordered. Thr61 is subject to Phosphothreonine. A phosphoserine mark is found at Ser92 and Ser152. Disordered stretches follow at residues 278 to 311 (DQNA…DNDH), 327 to 454 (EVEQ…GGIP), and 523 to 566 (ISQE…PENC). A compositionally biased stretch (basic and acidic residues) spans 363 to 374 (TPKESDISENRS). Polar residues predominate over residues 375-390 (SDQPAQELQESSGTNT). Residues Ser405 and Ser431 each carry the phosphoserine modification. Positions 424–435 (DIDENPDSEVDD) are enriched in acidic residues. Over residues 548-562 (SMEKTDGLMETRDPE) the composition is skewed to basic and acidic residues. Ser571 carries the phosphoserine modification. The interval 595-628 (TEGVANSPRAEAEVEIKKKKKKKKKNKNKKINGL) is disordered. The span at 611-624 (KKKKKKKKKNKNKK) shows a compositional bias: basic residues. Asp713 provides a ligand contact to S-adenosyl-L-methionine.

Belongs to the methyltransferase superfamily. Trimethylguanosine synthase family. In terms of assembly, may form homooligomers. Interacts with CREBBP/CBP, EED/WAIT1, EP300/P300, NCOA6/PRIP, PPARBP/PBP and SMN. A 55 kDa isoform is widely expressed while a 90 kDa isoform is detected exclusively in brain and testis (at protein level).

It is found in the cytoplasm. The protein localises to the nucleus. Its subcellular location is the cajal body. The protein resides in the nucleolus. The catalysed reaction is a 5'-end (N(7)-methyl 5'-triphosphoguanosine)-ribonucleoside in snRNA + S-adenosyl-L-methionine = a 5'-end (N(2),N(7)-dimethyl 5'-triphosphoguanosine)-ribonucleoside in snRNA + S-adenosyl-L-homocysteine + H(+). It carries out the reaction a 5'-end (N(7)-methyl 5'-triphosphoguanosine)-ribonucleoside in snoRNA + S-adenosyl-L-methionine = a 5'-end (N(2),N(7)-dimethyl 5'-triphosphoguanosine)-ribonucleoside in snoRNA + S-adenosyl-L-homocysteine + H(+). It catalyses the reaction a 5'-end (N(2),N(7)-dimethyl 5'-triphosphoguanosine)-ribonucleoside in snRNA + S-adenosyl-L-methionine = a 5'-end (N(2),N(2),N(7)-trimethyl 5'-triphosphoguanosine)-ribonucleoside in snRNA + S-adenosyl-L-homocysteine + H(+). The enzyme catalyses a 5'-end (N(2),N(7)-dimethyl 5'-triphosphoguanosine)-ribonucleoside in snoRNA + S-adenosyl-L-methionine = a 5'-end (N(2),N(2),N(7)-trimethyl 5'-triphosphoguanosine)-ribonucleoside in snoRNA + S-adenosyl-L-homocysteine + H(+). Catalyzes the 2 serial methylation steps for the conversion of the 7-monomethylguanosine (m(7)G) caps of snRNAs and snoRNAs to a 2,2,7-trimethylguanosine (m(2,2,7)G) cap structure. The enzyme is specific for guanine, and N7 methylation must precede N2 methylation. Hypermethylation of the m7G cap of U snRNAs leads to their concentration in nuclear foci, their colocalization with coilin and the formation of canonical Cajal bodies (CBs). Plays a role in transcriptional regulation. This is Trimethylguanosine synthase from Rattus norvegicus (Rat).